A 229-amino-acid chain; its full sequence is Artemin (229 aa).

A1 is modified (N-acetylalanine). Residues 25 to 173 enclose the Ferritin-like diiron domain; it reads HNFDPECEKA…DCLSNLHCIG (149 aa).

Belongs to the ferritin family.

The chain is Artemin from Artemia salina (Brine shrimp).